The following is a 448-amino-acid chain: Inositol hexakisphosphate kinase 2 (448 aa).

ATP contacts are provided by residues 229–231 (ENL) and D242. Substrate is bound by residues 238–246 (PCVLDLKMG), K244, and 258–265 (KAANQIRK). D405 is an ATP binding site. H408 serves as a coordination point for substrate.

The protein belongs to the inositol phosphokinase (IPK) family. In terms of tissue distribution, highly expressed in brain and lung, and at slightly lower levels in liver, kidney and testis.

It is found in the nucleus. It catalyses the reaction 1D-myo-inositol hexakisphosphate + ATP = 5-diphospho-1D-myo-inositol 1,2,3,4,6-pentakisphosphate + ADP. The protein operates within phospholipid metabolism; phosphatidylinositol metabolism. Converts inositol hexakisphosphate (InsP6) to diphosphoinositol pentakisphosphate (InsP7/PP-InsP5). May play a role in the regulation of Na(+)-dependent phosphate cotransport, possibly via its role in diphosphoinositol pentakisphosphate (InsP7/PP-InsP5) biosynthesis. The protein is Inositol hexakisphosphate kinase 2 (Ip6k2) of Mus musculus (Mouse).